The following is a 155-amino-acid chain: Ribosomal RNA large subunit methyltransferase H (155 aa).

S-adenosyl-L-methionine-binding positions include L73, G104, and 123 to 128; that span reads LSPLTL.

The protein belongs to the RNA methyltransferase RlmH family. Homodimer.

The protein resides in the cytoplasm. The catalysed reaction is pseudouridine(1915) in 23S rRNA + S-adenosyl-L-methionine = N(3)-methylpseudouridine(1915) in 23S rRNA + S-adenosyl-L-homocysteine + H(+). Its function is as follows. Specifically methylates the pseudouridine at position 1915 (m3Psi1915) in 23S rRNA. The protein is Ribosomal RNA large subunit methyltransferase H of Stutzerimonas stutzeri (strain A1501) (Pseudomonas stutzeri).